The following is a 493-amino-acid chain: Putative trans-acting regulator SP_1800 (493 aa).

It belongs to the AtxA/AcpA family.

The protein is Putative trans-acting regulator SP_1800 of Streptococcus pneumoniae serotype 4 (strain ATCC BAA-334 / TIGR4).